The following is a 575-amino-acid chain: Alpha-humulene synthase (575 aa).

Residues Asp325, Asp329, Asp469, and Glu477 each coordinate Mg(2+). The DDXXD motif signature appears at 325–329; sequence DDLYD.

This sequence belongs to the terpene synthase family. Tpsa subfamily. The cofactor is Mg(2+). Mn(2+) serves as cofactor.

The catalysed reaction is (2E,6E)-farnesyl diphosphate = alpha-humulene + diphosphate. The protein operates within sesquiterpene biosynthesis. Its pathway is terpene metabolism; oleoresin biosynthesis. Terpene synthase (TPS) involved in the biosynthesis of sesquiterpene natural products included in conifer oleoresin secretions and volatile emissions; these compounds contribute to biotic and abiotic stress defense against herbivores and pathogens. Catalyzes the conversion of (2E,6E)-farnesyl diphosphate (FPP) to (1E,4E,8E)-alpha-humulene. In Picea glauca (White spruce), this protein is Alpha-humulene synthase.